Reading from the N-terminus, the 226-residue chain is ATP synthase F(0) complex subunit a (226 aa).

A run of 6 helical transmembrane segments spans residues 6–26 (FASFITPTMMGLPIVVTIIMF), 68–88 (WALMIVSLIMFIGSTNLLGLL), 97–117 (QLSMNLSMAIPLWAGAVILGF), 138–158 (IPMLIIIETISLFIQPMALAV), 164–184 (ITAGHLLMHLIGGATLVLMDI), and 189–209 (ATITFIILLLLTVLEFAVALI).

It belongs to the ATPase A chain family. As to quaternary structure, component of the ATP synthase complex composed at least of ATP5F1A/subunit alpha, ATP5F1B/subunit beta, ATP5MC1/subunit c (homooctomer), MT-ATP6/subunit a, MT-ATP8/subunit 8, ATP5ME/subunit e, ATP5MF/subunit f, ATP5MG/subunit g, ATP5MK/subunit k, ATP5MJ/subunit j, ATP5F1C/subunit gamma, ATP5F1D/subunit delta, ATP5F1E/subunit epsilon, ATP5PF/subunit F6, ATP5PB/subunit b, ATP5PD/subunit d, ATP5PO/subunit OSCP. ATP synthase complex consists of a soluble F(1) head domain (subunits alpha(3) and beta(3)) - the catalytic core - and a membrane F(0) domain - the membrane proton channel (subunits c, a, 8, e, f, g, k and j). These two domains are linked by a central stalk (subunits gamma, delta, and epsilon) rotating inside the F1 region and a stationary peripheral stalk (subunits F6, b, d, and OSCP). Interacts with DNAJC30; interaction is direct.

The protein resides in the mitochondrion inner membrane. It catalyses the reaction H(+)(in) = H(+)(out). In terms of biological role, subunit a, of the mitochondrial membrane ATP synthase complex (F(1)F(0) ATP synthase or Complex V) that produces ATP from ADP in the presence of a proton gradient across the membrane which is generated by electron transport complexes of the respiratory chain. ATP synthase complex consist of a soluble F(1) head domain - the catalytic core - and a membrane F(1) domain - the membrane proton channel. These two domains are linked by a central stalk rotating inside the F(1) region and a stationary peripheral stalk. During catalysis, ATP synthesis in the catalytic domain of F(1) is coupled via a rotary mechanism of the central stalk subunits to proton translocation. With the subunit c (ATP5MC1), forms the proton-conducting channel in the F(0) domain, that contains two crucial half-channels (inlet and outlet) that facilitate proton movement from the mitochondrial intermembrane space (IMS) into the matrix. Protons are taken up via the inlet half-channel and released through the outlet half-channel, following a Grotthuss mechanism. This is ATP synthase F(0) complex subunit a from Rattus norvegicus (Rat).